Consider the following 396-residue polypeptide: 1-deoxy-D-xylulose 5-phosphate reductoisomerase (396 aa).

Residues threonine 10, glycine 11, serine 12, isoleucine 13, glutamine 38, and asparagine 124 each coordinate NADPH. Lysine 125 serves as a coordination point for 1-deoxy-D-xylulose 5-phosphate. Glutamate 126 is an NADPH binding site. Aspartate 150 is a Mn(2+) binding site. 1-deoxy-D-xylulose 5-phosphate-binding residues include serine 151, glutamate 152, serine 179, and histidine 202. A Mn(2+)-binding site is contributed by glutamate 152. Residue glycine 208 participates in NADPH binding. 4 residues coordinate 1-deoxy-D-xylulose 5-phosphate: serine 215, asparagine 220, lysine 221, and glutamate 224. A Mn(2+)-binding site is contributed by glutamate 224.

The protein belongs to the DXR family. Requires Mg(2+) as cofactor. Mn(2+) is required as a cofactor.

It carries out the reaction 2-C-methyl-D-erythritol 4-phosphate + NADP(+) = 1-deoxy-D-xylulose 5-phosphate + NADPH + H(+). It functions in the pathway isoprenoid biosynthesis; isopentenyl diphosphate biosynthesis via DXP pathway; isopentenyl diphosphate from 1-deoxy-D-xylulose 5-phosphate: step 1/6. Functionally, catalyzes the NADPH-dependent rearrangement and reduction of 1-deoxy-D-xylulose-5-phosphate (DXP) to 2-C-methyl-D-erythritol 4-phosphate (MEP). The sequence is that of 1-deoxy-D-xylulose 5-phosphate reductoisomerase from Ralstonia pickettii (strain 12J).